The chain runs to 277 residues: C2H2-type zinc-finger transcription factor (277 aa).

2 disordered regions span residues Pro-23–Pro-66 and Met-78–Ile-146. Polar residues predominate over residues Glu-27 to Arg-37. A C2H2-type; degenerate zinc finger spans residues His-185 to Thr-208.

Belongs to the GLI C2H2-type zinc-finger protein family.

Its subcellular location is the nucleus. In terms of biological role, C2H2-type zinc-finger transcription factor that controls the expression of the nonribosomal peptide synthases inpA and inpB, as well as of the other inp cluster-associated genes. Also mediates the expression of the asperfuranone biosynthesis gene cluster by binding to the afoA promoter. Probably recognizes the 5'-CT/C/AAAAGGAT/AT/GG/CA-3' motif in the promoters of teget genes. The polypeptide is C2H2-type zinc-finger transcription factor (Emericella nidulans (strain FGSC A4 / ATCC 38163 / CBS 112.46 / NRRL 194 / M139) (Aspergillus nidulans)).